The following is a 396-amino-acid chain: Purine ribonucleoside efflux pump NepI (396 aa).

At 1-21 the chain is on the cytoplasmic side; sequence MSEFIAENRGADAITRPNWSA. The chain crosses the membrane as a helical span at residues 22 to 42; it reads VFSVAFCVACLIIVEFLPVSL. At 43–54 the chain is on the periplasmic side; that stretch reads LTPMAQDLGISE. The chain crosses the membrane as a helical span at residues 55–75; that stretch reads GVAGQSVTVTAFVAMFASLFI. The Cytoplasmic segment spans residues 76 to 85; that stretch reads TQTIQATDRR. Residues 86–106 traverse the membrane as a helical segment; sequence YVVILFAVLLTLSCLLVSFAN. Residue serine 107 is a topological domain, periplasmic. The helical transmembrane segment at 108 to 128 threads the bilayer; sequence FSLLLIGRACLGLALGGFWAM. The Cytoplasmic portion of the chain corresponds to 129 to 147; that stretch reads SASLTMRLVPPRTVPKALS. The helical transmembrane segment at 148 to 168 threads the bilayer; sequence VIFGAVSIALVIAAPLGSFLG. At 169–175 the chain is on the periplasmic side; it reads ELIGWRN. The helical transmembrane segment at 176–196 threads the bilayer; that stretch reads VFNAAAAMGVLCIFWIIKSLP. Residues 197–215 lie on the Cytoplasmic side of the membrane; the sequence is SLPGEPSHQKQNTFRLLQR. The helical transmembrane segment at 216–236 threads the bilayer; that stretch reads PGVMAGMIAIFMSFAGQFAFF. Residues 237-255 lie on the Periplasmic side of the membrane; that stretch reads TYIRPVYMNLAGFGVDGLT. Residues 256-276 form a helical membrane-spanning segment; it reads LVLLSFGIASFVGTSLSSFIL. Residues 277-281 are Cytoplasmic-facing; that stretch reads KRSVK. The chain crosses the membrane as a helical span at residues 282 to 302; the sequence is LALAGAPFVLALSALVLTLWG. Over 303–305 the chain is Periplasmic; that stretch reads SDK. Residues 306 to 326 form a helical membrane-spanning segment; sequence IVATGVAIIWGLTFALIPVGW. Over 327–343 the chain is Cytoplasmic; the sequence is STWITRSLADQAEKAGS. Residues 344-364 traverse the membrane as a helical segment; that stretch reads IQVAVIQLANTCGAAIGGYAL. Residues 365-366 are Periplasmic-facing; the sequence is DN. A helical membrane pass occupies residues 367–387; that stretch reads IGLTSPLMLSGTLMLLTALLV. At 388-396 the chain is on the cytoplasmic side; the sequence is TAKVKMKKS.

It belongs to the major facilitator superfamily. DHA1 family. NepI (TC 2.A.1.2.26) subfamily.

The protein localises to the cell inner membrane. It carries out the reaction inosine(in) + H(+)(out) = inosine(out) + H(+)(in). The catalysed reaction is guanosine(in) + H(+)(out) = guanosine(out) + H(+)(in). Involved in the efflux of purine ribonucleosides, such as inosine and guanosine. The chain is Purine ribonucleoside efflux pump NepI from Escherichia coli O1:K1 / APEC.